We begin with the raw amino-acid sequence, 1412 residues long: DNA-directed RNA polymerase subunit beta' (1412 aa).

Residues aspartate 543, aspartate 545, and aspartate 547 each contribute to the Mg(2+) site. Zn(2+) contacts are provided by cysteine 1017, cysteine 1092, cysteine 1099, and cysteine 1102.

Belongs to the RNA polymerase beta' chain family. The RNAP catalytic core consists of 2 alpha, 1 beta, 1 beta' and 1 omega subunit. When a sigma factor is associated with the core the holoenzyme is formed, which can initiate transcription. The cofactor is Mg(2+). Zn(2+) serves as cofactor.

It catalyses the reaction RNA(n) + a ribonucleoside 5'-triphosphate = RNA(n+1) + diphosphate. Its function is as follows. DNA-dependent RNA polymerase catalyzes the transcription of DNA into RNA using the four ribonucleoside triphosphates as substrates. The chain is DNA-directed RNA polymerase subunit beta' from Mesomycoplasma hyopneumoniae (strain 232) (Mycoplasma hyopneumoniae).